Reading from the N-terminus, the 589-residue chain is Splicing factor U2af large subunit B (589 aa).

Positions 1–195 (MMSYEGNGDG…KRRSGFDMAP (195 aa)) are disordered. Residues 14–27 (STENHNENYISLES) show a composition bias toward polar residues. Basic and acidic residues-rich tracts occupy residues 29-100 (PFHE…DRQR) and 109-145 (RDRSRERSEKRDDLDDDHHRRSRDRDRRRSRDRDREV). Composition is skewed to basic residues over residues 146–156 (RHRRRSRSRSR) and 164–188 (RSEHRHKSEHRSRSRSRSRSKSKRR). 3 consecutive RRM domains span residues 255–338 (RRVY…RPTD), 375–453 (DRIF…RAIQ), and 494–580 (QVVT…YPED).

Belongs to the splicing factor SR family. In terms of assembly, component of the spliceosome. Interacts with SF1 in the nucleus.

It localises to the nucleus. It is found in the nucleus speckle. Its function is as follows. Necessary for the splicing of pre-mRNA. The polypeptide is Splicing factor U2af large subunit B (Arabidopsis thaliana (Mouse-ear cress)).